Here is a 190-residue protein sequence, read N- to C-terminus: dITP/XTP pyrophosphatase (190 aa).

Serine 7–lysine 12 serves as a coordination point for substrate. The active-site Proton acceptor is aspartate 68. Position 68 (aspartate 68) interacts with Mg(2+). Substrate contacts are provided by residues threonine 69, phenylalanine 148–aspartate 151, lysine 171, and histidine 176–arginine 177.

Belongs to the HAM1 NTPase family. Homodimer. Requires Mg(2+) as cofactor.

The catalysed reaction is XTP + H2O = XMP + diphosphate + H(+). It carries out the reaction dITP + H2O = dIMP + diphosphate + H(+). It catalyses the reaction ITP + H2O = IMP + diphosphate + H(+). Functionally, pyrophosphatase that catalyzes the hydrolysis of nucleoside triphosphates to their monophosphate derivatives, with a high preference for the non-canonical purine nucleotides XTP (xanthosine triphosphate), dITP (deoxyinosine triphosphate) and ITP. Seems to function as a house-cleaning enzyme that removes non-canonical purine nucleotides from the nucleotide pool, thus preventing their incorporation into DNA/RNA and avoiding chromosomal lesions. This Flavobacterium psychrophilum (strain ATCC 49511 / DSM 21280 / CIP 103535 / JIP02/86) protein is dITP/XTP pyrophosphatase.